A 287-amino-acid chain; its full sequence is UPF0354 protein SSP1020 (287 aa).

The protein belongs to the UPF0354 family.

In Staphylococcus saprophyticus subsp. saprophyticus (strain ATCC 15305 / DSM 20229 / NCIMB 8711 / NCTC 7292 / S-41), this protein is UPF0354 protein SSP1020.